Here is a 341-residue protein sequence, read N- to C-terminus: Geranylgeranyl transferase type-2 subunit beta (341 aa).

PFTB repeat units lie at residues 15-55 (KSKH…ITMN), 62-104 (QQDV…KIYD), 122-163 (RERL…SLLN), 170-211 (ADTA…AIMN), 223-264 (VKLI…SILK), and 271-313 (LKIL…SLID). Geranylgeranyl diphosphate contacts are provided by residues 196–198 (HAA) and 243–255 (RPEKLPDVCYSWW). Positions 249, 251, and 301 each coordinate Zn(2+).

Belongs to the protein prenyltransferase subunit beta family. In terms of assembly, heterodimer of an alpha and a beta subunit. Zn(2+) serves as cofactor.

It carries out the reaction geranylgeranyl diphosphate + L-cysteinyl-[protein] = S-geranylgeranyl-L-cysteinyl-[protein] + diphosphate. Its function is as follows. Catalyzes the transfer of a geranyl-geranyl moiety from geranyl-geranyl pyrophosphate to proteins having the C-terminal -XCC or -XCXC, where both cysteines may become modified. Acts on YPT1 and SEC4. This is Geranylgeranyl transferase type-2 subunit beta (BET2) from Candida albicans (Yeast).